The following is a 111-amino-acid chain: PHD finger-like domain-containing protein 5A (111 aa).

It belongs to the PHF5 family.

The protein is PHD finger-like domain-containing protein 5A of Drosophila melanogaster (Fruit fly).